Consider the following 303-residue polypeptide: Acetylglutamate kinase (303 aa).

Substrate-binding positions include Gly68–Gly69, Arg90, and Asn194.

Belongs to the acetylglutamate kinase family. ArgB subfamily.

It localises to the cytoplasm. It catalyses the reaction N-acetyl-L-glutamate + ATP = N-acetyl-L-glutamyl 5-phosphate + ADP. The protein operates within amino-acid biosynthesis; L-arginine biosynthesis; N(2)-acetyl-L-ornithine from L-glutamate: step 2/4. Its function is as follows. Catalyzes the ATP-dependent phosphorylation of N-acetyl-L-glutamate. The protein is Acetylglutamate kinase of Psychrobacter arcticus (strain DSM 17307 / VKM B-2377 / 273-4).